Here is a 425-residue protein sequence, read N- to C-terminus: Serine--tRNA ligase (425 aa).

228–230 (TAE) provides a ligand contact to L-serine. 259 to 261 (RSE) is a binding site for ATP. Residue E282 participates in L-serine binding. 346-349 (EIAS) lines the ATP pocket. S382 lines the L-serine pocket.

This sequence belongs to the class-II aminoacyl-tRNA synthetase family. Type-1 seryl-tRNA synthetase subfamily. In terms of assembly, homodimer. The tRNA molecule binds across the dimer.

Its subcellular location is the cytoplasm. It catalyses the reaction tRNA(Ser) + L-serine + ATP = L-seryl-tRNA(Ser) + AMP + diphosphate + H(+). It carries out the reaction tRNA(Sec) + L-serine + ATP = L-seryl-tRNA(Sec) + AMP + diphosphate + H(+). Its pathway is aminoacyl-tRNA biosynthesis; selenocysteinyl-tRNA(Sec) biosynthesis; L-seryl-tRNA(Sec) from L-serine and tRNA(Sec): step 1/1. Functionally, catalyzes the attachment of serine to tRNA(Ser). Is also able to aminoacylate tRNA(Sec) with serine, to form the misacylated tRNA L-seryl-tRNA(Sec), which will be further converted into selenocysteinyl-tRNA(Sec). This is Serine--tRNA ligase from Rickettsia peacockii (strain Rustic).